A 412-amino-acid chain; its full sequence is NADH-quinone oxidoreductase subunit D (412 aa).

It belongs to the complex I 49 kDa subunit family. As to quaternary structure, NDH-1 is composed of 14 different subunits. Subunits NuoB, C, D, E, F, and G constitute the peripheral sector of the complex.

Its subcellular location is the cell inner membrane. The catalysed reaction is a quinone + NADH + 5 H(+)(in) = a quinol + NAD(+) + 4 H(+)(out). In terms of biological role, NDH-1 shuttles electrons from NADH, via FMN and iron-sulfur (Fe-S) centers, to quinones in the respiratory chain. The immediate electron acceptor for the enzyme in this species is believed to be a menaquinone. Couples the redox reaction to proton translocation (for every two electrons transferred, four hydrogen ions are translocated across the cytoplasmic membrane), and thus conserves the redox energy in a proton gradient. The polypeptide is NADH-quinone oxidoreductase subunit D (Flavobacterium johnsoniae (strain ATCC 17061 / DSM 2064 / JCM 8514 / BCRC 14874 / CCUG 350202 / NBRC 14942 / NCIMB 11054 / UW101) (Cytophaga johnsonae)).